The primary structure comprises 415 residues: 3-isopropylmalate dehydratase large subunit (415 aa).

Residues C297, C355, and C358 each coordinate [4Fe-4S] cluster.

Belongs to the aconitase/IPM isomerase family. LeuC type 2 subfamily. In terms of assembly, heterodimer of LeuC and LeuD. [4Fe-4S] cluster is required as a cofactor.

It catalyses the reaction (2R,3S)-3-isopropylmalate = (2S)-2-isopropylmalate. It participates in amino-acid biosynthesis; L-leucine biosynthesis; L-leucine from 3-methyl-2-oxobutanoate: step 2/4. In terms of biological role, catalyzes the isomerization between 2-isopropylmalate and 3-isopropylmalate, via the formation of 2-isopropylmaleate. The sequence is that of 3-isopropylmalate dehydratase large subunit from Caldivirga maquilingensis (strain ATCC 700844 / DSM 13496 / JCM 10307 / IC-167).